A 356-amino-acid polypeptide reads, in one-letter code: Tetraacyldisaccharide 4'-kinase (356 aa).

Residue 51–58 (GWGGSGKT) participates in ATP binding.

Belongs to the LpxK family.

It catalyses the reaction a lipid A disaccharide + ATP = a lipid IVA + ADP + H(+). The protein operates within glycolipid biosynthesis; lipid IV(A) biosynthesis; lipid IV(A) from (3R)-3-hydroxytetradecanoyl-[acyl-carrier-protein] and UDP-N-acetyl-alpha-D-glucosamine: step 6/6. In terms of biological role, transfers the gamma-phosphate of ATP to the 4'-position of a tetraacyldisaccharide 1-phosphate intermediate (termed DS-1-P) to form tetraacyldisaccharide 1,4'-bis-phosphate (lipid IVA). This Oleidesulfovibrio alaskensis (strain ATCC BAA-1058 / DSM 17464 / G20) (Desulfovibrio alaskensis) protein is Tetraacyldisaccharide 4'-kinase.